An 80-amino-acid polypeptide reads, in one-letter code: Large ribosomal subunit protein bL31 (80 aa).

Zn(2+)-binding residues include Cys16, Cys18, Cys38, and Cys41.

The protein belongs to the bacterial ribosomal protein bL31 family. Type A subfamily. Part of the 50S ribosomal subunit. Requires Zn(2+) as cofactor.

In terms of biological role, binds the 23S rRNA. The sequence is that of Large ribosomal subunit protein bL31 from Mycobacterium avium (strain 104).